The following is a 167-amino-acid chain: Ribosome maturation factor RimM (167 aa).

The PRC barrel domain maps to 94–166 (QNRAWLHELE…YIVVPRFDEF (73 aa)).

The protein belongs to the RimM family. As to quaternary structure, binds ribosomal protein uS19.

The protein resides in the cytoplasm. In terms of biological role, an accessory protein needed during the final step in the assembly of 30S ribosomal subunit, possibly for assembly of the head region. Essential for efficient processing of 16S rRNA. May be needed both before and after RbfA during the maturation of 16S rRNA. It has affinity for free ribosomal 30S subunits but not for 70S ribosomes. This is Ribosome maturation factor RimM from Chlorobium phaeovibrioides (strain DSM 265 / 1930) (Prosthecochloris vibrioformis (strain DSM 265)).